The sequence spans 135 residues: uncharacterized protein (135 aa).

Belongs to the asp23 family.

This is an uncharacterized protein from Bacillus subtilis (strain 168).